Here is a 601-residue protein sequence, read N- to C-terminus: Potassium channel KAT2 (601 aa).

At 1 to 42 the chain is on the cytoplasmic side; it reads METISNIFHNDPLPPLGARANQSIKLRKFIISPYDSRYRTWE. A helical transmembrane segment spans residues 43-63; it reads TFLLVLVVYSAWICPFELAYL. Over 64 to 71 the chain is Extracellular; it reads RNLSWKVS. A helical transmembrane segment spans residues 72 to 92; the sequence is LVDNIIDSFFAIDIILTFFLA. Topologically, residues 93-112 are cytoplasmic; sequence YLDQKSYLLVDDPKRIVARY. The chain crosses the membrane as a helical span at residues 113 to 133; it reads FSSWFLFDVCSTIPYQLLGQI. Residues 134-144 lie on the Extracellular side of the membrane; it reads FKKHENGLAYR. Residues 145 to 165 form a helical; Voltage-sensor membrane-spanning segment; it reads LLSMLRLWRLRRLSELFARLE. Residues 166–179 are Cytoplasmic-facing; that stretch reads KDIRLNYYWIRCTK. The helical transmembrane segment at 180-200 threads the bilayer; it reads LISVTLFAVHCSGCFNYLIAD. Over 201–227 the chain is Extracellular; sequence RYPNPARTWIGAAIPNYRSQNLWVRYV. The pore-forming intramembrane region spans 228 to 247; it reads TAIYWSITTLTTTGYGDLHA. At 248 to 251 the chain is on the extracellular side; the sequence is ENQR. A helical membrane pass occupies residues 252 to 272; that stretch reads EMLFSICYMLFNLGLTAYLIG. The Cytoplasmic segment spans residues 273–601; sequence NMTNLVVQGS…DGDHLFFMEI (329 aa). 356–475 serves as a coordination point for a nucleoside 3',5'-cyclic phosphate; it reads LFHGVSFTCM…RVILNNLSQK (120 aa). One can recognise a KHA domain in the interval 530–601; it reads RVTIHMYSQR…DGDHLFFMEI (72 aa).

This sequence belongs to the potassium channel family. Plant (TC 1.A.1.4) subfamily.

The protein localises to the membrane. In terms of biological role, probable inward-rectifying potassium channel. Assuming opened or closed conformations in response to the voltage difference across the membrane, the channel is activated by hyperpolarization. This chain is Potassium channel KAT2, found in Oryza sativa subsp. japonica (Rice).